The chain runs to 139 residues: Protein cornichon homolog 4 (139 aa).

The next 3 membrane-spanning stretches (helical) occupy residues 5–25 (VFVFSLLDCCALIFLSVYFII), 57–77 (IVTVLLLMSLHWFIFLLNLPV), and 118–138 (LGFHLLCFFMYLYSMILALIN).

It belongs to the cornichon family. As to quaternary structure, interacts with Sec23/24 complex components SEC24B and SEC24D. Interacts with CCR5. Interacts with ADRB2 in the early secretory pathway.

It is found in the membrane. The protein localises to the endoplasmic reticulum. The protein resides in the endoplasmic reticulum-Golgi intermediate compartment. Functionally, involved in G protein-coupled receptors (GPCRs) trafficking from the endoplasmic reticulum to the cell surface; it promotes the exit of GPCRs from the early secretory pathway, likely through interaction with the COPII machinery. The chain is Protein cornichon homolog 4 (CNIH4) from Homo sapiens (Human).